Consider the following 305-residue polypeptide: Lysosomal thioesterase PPT2 (305 aa).

The signal sequence occupies residues 1-32; sequence MLGLPERRLPSAEFLLLLPFLLLLLLLLPAAP. Cystine bridges form between cysteine 112-cysteine 120 and cysteine 168-cysteine 179. Serine 114 (nucleophile) is an active-site residue. A glycan (N-linked (GlcNAc...) asparagine) is linked at asparagine 193. Residues aspartate 231 and histidine 286 contribute to the active site. A disulfide bridge connects residues cysteine 279 and cysteine 299.

This sequence belongs to the palmitoyl-protein thioesterase family.

The protein resides in the lysosome. The enzyme catalyses hexadecanoyl-CoA + H2O = hexadecanoate + CoA + H(+). It catalyses the reaction S-hexadecanoyl-N-acetylcysteamine + H2O = N-acetylcysteamine + hexadecanoate + H(+). In terms of biological role, catalyzes the cleavage of thioester bonds from S-palmitoyl-CoA or S-palmitoyl-N-acetylcysteamine (unbranched structures) but does not have activity against palmitoylcysteine or palmitoylated proteins, branched structures or bulky head groups. Conversely, hydrolyzes both long and short chain fatty acyl-CoA substrate. This chain is Lysosomal thioesterase PPT2 (PPT2), found in Bos taurus (Bovine).